The primary structure comprises 161 residues: Peptidyl-prolyl cis-trans isomerase-like 3 (161 aa).

Residue S2 is modified to N-acetylserine. In terms of domain architecture, PPIase cyclophilin-type spans 2-154 (SVTLHTDVGD…NDVHIKDITI (153 aa)). Position 61 is an omega-N-methylarginine (R61).

This sequence belongs to the cyclophilin-type PPIase family. PPIL3 subfamily. Identified in the spliceosome C complex.

The enzyme catalyses [protein]-peptidylproline (omega=180) = [protein]-peptidylproline (omega=0). In terms of biological role, PPIases accelerate the folding of proteins. It catalyzes the cis-trans isomerization of proline imidic peptide bonds in oligopeptides. May be involved in pre-mRNA splicing. The protein is Peptidyl-prolyl cis-trans isomerase-like 3 (Ppil3) of Mus musculus (Mouse).